The following is a 320-amino-acid chain: MQTRNTFSWIREEITRSISVSLMIYIITWASISSAYPIFAQQNYENPREATGRIVCANCHLANKPVDIEVPQTVLPDTVFEAVVKIPYDMQLKQVLANGKKGALNVGAVLILPEGFELAPPDRISPEMKEKIGNLSFQNYRPNKKNILVIGPVPGQKYSEITFPILAPDPATNKDVHFLKYPIYVGGNRGRGQIYPDGSKSNNTVYNATAGGIISKILRKEKGGYEITIVDASNGREVIDIIPRGLELLVSEGESIKLDQPLTSNPNVGGFGQGDAEIVLQDPLRVQGLLFFLGSVVLAQIFLVLKKKQFEKVQLSEMNF.

The first 35 residues, 1-35 (MQTRNTFSWIREEITRSISVSLMIYIITWASISSA), serve as a signal peptide directing secretion. Residues Tyr-36, Cys-56, Cys-59, and His-60 each coordinate heme. A helical transmembrane segment spans residues 286 to 306 (VQGLLFFLGSVVLAQIFLVLK).

It belongs to the cytochrome f family. The 4 large subunits of the cytochrome b6-f complex are cytochrome b6, subunit IV (17 kDa polypeptide, petD), cytochrome f and the Rieske protein, while the 4 small subunits are PetG, PetL, PetM and PetN. The complex functions as a dimer. The cofactor is heme.

It is found in the plastid. The protein resides in the chloroplast thylakoid membrane. In terms of biological role, component of the cytochrome b6-f complex, which mediates electron transfer between photosystem II (PSII) and photosystem I (PSI), cyclic electron flow around PSI, and state transitions. This chain is Cytochrome f, found in Crucihimalaya wallichii (Rock-cress).